The sequence spans 984 residues: Probable serine/threonine-protein kinase ireA (984 aa).

A signal peptide spans 1–26; that stretch reads MTFSKTRNKIIFLLFLIIINIFNINA. Residues 27 to 436 are Extracellular-facing; sequence YIKDENEDDL…NDLLDSNKLK (410 aa). Disordered stretches follow at residues 70-91 and 137-157; these read YSTS…EITK and EDKS…DENK. 2 stretches are compositionally biased toward low complexity: residues 82 to 91 and 141 to 150; these read STSTSTEITK and STSSTSTTSE. Asn228 is a glycosylation site (N-linked (GlcNAc...) asparagine). Residues 352–427 form a disordered region; that stretch reads SPPSNNNNNN…GANNNNNNNN (76 aa). A compositionally biased stretch (low complexity) spans 356 to 397; it reads NNNNNNNNNNNNNNNNNNNNNNNNNNNNNNNNNNKNNNNNNK. Residue Asn398 is glycosylated (N-linked (GlcNAc...) asparagine). The chain crosses the membrane as a helical span at residues 437–457; the sequence is NYDIYLYSSIVILITSIIVFI. Over 458 to 984 the chain is Cytoplasmic; it reads RSKKNFNLIN…NDQYFVQYYY (527 aa). Positions 467–533 form a coiled coil; it reads NVNNNNNQNN…NDLIDEFIST (67 aa). The span at 472–489 shows a compositional bias: low complexity; the sequence is NNQNNNQNSNQNNNINNK. A disordered region spans residues 472 to 518; it reads NNQNNNQNSNQNNNINNKKTPKKKKKKQKNKNNKNNNDEDDENEIEN. The span at 490–503 shows a compositional bias: basic residues; the sequence is KTPKKKKKKQKNKN. Over residues 509–518 the composition is skewed to acidic residues; it reads DEDDENEIEN. The Protein kinase domain maps to 575–851; sequence IITNKILGTG…IGECINHPFF (277 aa). ATP-binding positions include 581–589 and Lys603; that span reads LGTGSCGTI. Polar residues predominate over residues 667–676; the sequence is PTDSPSIQSS. Positions 667-692 are disordered; it reads PTDSPSIQSSNNNGNGNNGNNNNNNQ. The segment covering 677-691 has biased composition (low complexity); sequence NNNGNGNNGNNNNNN. Asp722 serves as the catalytic Proton acceptor. One can recognise a KEN domain in the interval 854–984; the sequence is VHKKLSFLVA…NDQYFVQYYY (131 aa).

The protein belongs to the protein kinase superfamily. Ser/Thr protein kinase family.

It localises to the membrane. The enzyme catalyses L-seryl-[protein] + ATP = O-phospho-L-seryl-[protein] + ADP + H(+). It catalyses the reaction L-threonyl-[protein] + ATP = O-phospho-L-threonyl-[protein] + ADP + H(+). The sequence is that of Probable serine/threonine-protein kinase ireA (ireA) from Dictyostelium discoideum (Social amoeba).